A 394-amino-acid chain; its full sequence is Hemagglutinin-esterase (394 aa).

The N-terminal stretch at 1-16 (MARFIILFLLLAPVYS) is a signal peptide. At 17–347 (RLCLRNHPDT…NNRVDAIPPQ (331 aa)) the chain is on the extracellular side. Serine 32 is an active-site residue. The Cell attachment site motif lies at 119 to 121 (RGD). Residues aspartate 261 and histidine 264 contribute to the active site. An N-linked (GlcNAc...) asparagine; by host glycan is attached at asparagine 333. The segment at 335–358 (TDVNNRVDAIPPQLSNIFISMGVA) is highly polymorphic region. The helical transmembrane segment at 348 to 368 (LSNIFISMGVAGFGIALFLAG) threads the bilayer. The Cytoplasmic segment spans residues 369–394 (WKACVWIAAFMYKSRGRNPPANLSVA).

It is found in the host membrane. The protein localises to the virion membrane. It carries out the reaction N-acetyl-9-O-acetylneuraminate + H2O = N-acetylneuraminate + acetate + H(+). It catalyses the reaction N-acetyl-4-O-acetylneuraminate + H2O = N-acetylneuraminate + acetate + H(+). Functionally, performs attachment to host receptor thereby inducing virus particle entry into target cell. Binds specifically to 5-N-acetyl-4-O-acetyl neuraminic acid on host cells, which plays a major role in cell tropism of the virus. ALso mediates de-O-acetylation of N-acetyl-4-O-acetylneuraminic acid. This receptor-destroying activity is important for virus release as it probably helps preventing self-aggregation and ensures the efficient spread of the progeny virus from cell to cell. The highly polymorphic region (HPR) modulates the virulence in host. Catalyzes the removal of terminal sialic acid residues from viral and cellular glycoconjugates. This is Hemagglutinin-esterase from Gadus morhua (Atlantic cod).